A 140-amino-acid polypeptide reads, in one-letter code: Nucleoside diphosphate kinase (140 aa).

ATP is bound by residues lysine 11, phenylalanine 59, arginine 87, threonine 93, arginine 104, and asparagine 114. The active-site Pros-phosphohistidine intermediate is histidine 117.

Belongs to the NDK family. In terms of assembly, homotetramer. Mg(2+) serves as cofactor.

It is found in the cytoplasm. The catalysed reaction is a 2'-deoxyribonucleoside 5'-diphosphate + ATP = a 2'-deoxyribonucleoside 5'-triphosphate + ADP. The enzyme catalyses a ribonucleoside 5'-diphosphate + ATP = a ribonucleoside 5'-triphosphate + ADP. Functionally, major role in the synthesis of nucleoside triphosphates other than ATP. The ATP gamma phosphate is transferred to the NDP beta phosphate via a ping-pong mechanism, using a phosphorylated active-site intermediate. This is Nucleoside diphosphate kinase from Paracoccus denitrificans (strain Pd 1222).